A 571-amino-acid polypeptide reads, in one-letter code: Protein tesmin/TSO1-like CXC 6 (571 aa).

Disordered regions lie at residues Met1–Ser52, Ile92–Lys119, Asn293–Ala325, Leu370–Ser411, and Asn507–Leu571. A compositionally biased stretch (basic and acidic residues) spans Gly7–Glu16. The CRC domain occupies Lys117 to Gly241. Composition is skewed to polar residues over residues Asn293–Ser319, Gln373–Val388, and Gly508–Lys539. The span at Gln540 to Thr557 shows a compositional bias: low complexity.

The protein belongs to the lin-54 family. Ubiquitous but expressed mostly in flowers.

The protein localises to the nucleus. In terms of biological role, plays a role in development of both male and female reproductive tissues. This Arabidopsis thaliana (Mouse-ear cress) protein is Protein tesmin/TSO1-like CXC 6 (TCX6).